The primary structure comprises 78 residues: Large ribosomal subunit protein bL28 (78 aa).

The disordered stretch occupies residues 1 to 31; it reads MAAHCQVTGAEPGFGHSISHSHRRNKRRFDP.

Belongs to the bacterial ribosomal protein bL28 family.

The protein is Large ribosomal subunit protein bL28 of Paenarthrobacter aurescens (strain TC1).